The sequence spans 1096 residues: Centrosome-associated zinc finger protein Cp190 (1096 aa).

Positions 1–209 (MGEVKSVKVD…GDSSNVKQEP (209 aa)) are involved in microtubule and centrosome binding. Residues 30-97 (CDLTLQFRDN…MYTGTLEFEL (68 aa)) enclose the BTB domain. The disordered stretch occupies residues 126 to 308 (MENVNRQQRP…PQGTQTQLEH (183 aa)). Polar residues-rich tracts occupy residues 175–213 (RANT…TSPF) and 220–230 (YNNNKRPAQTS). Phosphoserine is present on residues S197 and S211. Residues 207 to 271 (QEPTSPFEQL…GDNDPEYDGG (65 aa)) are nuclear localization. The interval 210–245 (TSPFEQLRKGYNNNKRPAQTSLLSPPSKKPSLEEVK) is involved in interaction with cliff. T229 is modified (phosphothreonine). S233 carries the phosphoserine modification. Residues 239–252 (PSLEEVKEFAEQQR) show a composition bias toward basic and acidic residues. Residues 245-468 (KEFAEQQRMR…IAQGAENTTG (224 aa)) are centrosomal targeting M domain involved in interaction with ZIPIC. Residues 292–305 (STSKQQSPQGTQTQ) are compositionally biased toward low complexity. Residues S298 and S319 each carry the phosphoserine modification. The segment at 309 to 390 (GSTTIILKQD…KPPANQSSAT (82 aa)) is involved in interaction with cliff. The interval 366 to 449 (NTPAAPTEKS…ANTAAAQKRR (84 aa)) is disordered. Positions 385 to 508 (NQSSATTSPH…KETIDPALCE (124 aa)) are centrosomal localization and interaction with microtubules. Positions 412 to 445 (AQQKAASSQQKSGTSQTTGNQGTGANPPANTAAA) are enriched in low complexity. 2 C2H2-type zinc fingers span residues 538-561 (AECA…NEVH) and 567-590 (QQCI…KSYH). T603 bears the Phosphothreonine mark. Positions 608-625 (LGSQDEEEEAEGDEEQEP) are enriched in acidic residues. The disordered stretch occupies residues 608-630 (LGSQDEEEEAEGDEEQEPEQTGK). S610, S708, and S723 each carry phosphoserine. The tract at residues 710–733 (PEAEHVKQETDEKSLAGTEEEYDD) is disordered. Residues 711–723 (EAEHVKQETDEKS) are compositionally biased toward basic and acidic residues. At T727 the chain carries Phosphothreonine. Phosphoserine occurs at positions 745, 748, 757, and 760. The segment at 770–927 (LIAESEEQSN…EDSPIPHSDS (158 aa)) is disordered. Over residues 777–799 (QSNKEPKSDKPRDDISEKLKELT) the composition is skewed to basic and acidic residues. Acidic residues predominate over residues 802–812 (WTEDENDDDVD). At T817 the chain carries Phosphothreonine. Composition is skewed to basic and acidic residues over residues 825-834 (ANKDPEPTVH), 849-861 (KGPE…KASE), 882-907 (EKMD…KEAE), and 914-927 (EFIK…HSDS). Residues S920, S925, and S927 each carry the phosphoserine modification. T936 bears the Phosphothreonine mark. Phosphoserine is present on S938. 2 stretches are compositionally biased toward basic and acidic residues: residues 960-973 (IAEA…KDIV) and 1011-1035 (AAEK…EDKP). The disordered stretch occupies residues 960-1096 (IAEAEKPDQE…GVSAAAKEEL (137 aa)). S1071 and S1074 each carry phosphoserine. Residues 1076–1086 (WGDDDEDEDEN) are compositionally biased toward acidic residues.

In terms of assembly, homodimerizes via the N-terminal BTB domain. Component of the gypsy chromatin insulator complex, composed of Cp190, mod(mdg4) and su(Hw). The gypsy chromatin insulator complex interacts with Topors via mod(mdg4) and su(Hw). Interacts with Cp60. Interacts with inv. Interacts with Nup98. Interacts (via BTB domain) with pita (via region between the ZAD domain and the first zinc finger domain); the interaction is direct. Interacts with ZIPIC (via region between the ZAD domain and the first zinc finger domain); the interaction is direct. Interacts (via regions between the BTB domain and first zinc finger domain) with cliff (via regions flanking MADF domain 1); the interaction is probably direct. Associates (via N-terminus) with microtubules; the interaction is direct, is enhanced by dimerization and involves multiple regions within the N-terminus. Microtubule association is enriched at growing plus ends. In terms of tissue distribution, expressed in spermatids but not in mature spermatozoa. Localizes within the spermatids to a sheath of microtubules around the nucleus and to microtubules within the tail.

Its subcellular location is the nucleus. The protein localises to the cytoplasm. It is found in the cytoskeleton. The protein resides in the microtubule organizing center. It localises to the centrosome. Its subcellular location is the chromosome. The protein localises to the nucleoplasm. Functionally, plays a central role in chromatin domain organization and boundary function through recruitment by a range of insulator DNA-binding proteins, including ZIPIC, pita, CTCF, su(Hw), cliff and others. Together with pita and CTCF cooperatively binds to and regulates the activity of the Miscadastral pigmentation (MCP) insulator. Cooperatively recruited to the front-ultraabdominal (Fub) boundary by pita, su(Hw) and cliff. Recruitment of Cp190 together with Chro/chromator induces chromatin decondensation. Component of the gypsy chromatin insulator complex which is required for the function of the gypsy chromatin insulator and other endogenous chromatin insulators. Chromatin insulators are regulatory elements that establish independent domains of transcriptional activity within eukaryotic genomes. Insulators have two defining properties; they can block the communication between an enhancer and a promoter when placed between them and can also buffer transgenes from position effect variegation (PEV). Insulators are proposed to structure the chromatin fiber into independent domains of differing transcriptional potential by promoting the formation of distinct chromatin loops to form topologically associating domains (TADs). This chromatin looping may involve the formation of insulator bodies, where homotypic interactions between individual subunits of the insulator complex could promote the clustering of widely spaced insulators at the nuclear periphery. Within the gypsy insulator complex, this protein may directly bind to insulator DNA at sites distinct from those recognized by su(Hw). Required during embryogenesis for axial expansion, an actin/myosin dependent process that distributes the dividing nuclei along the anterior-posterior axis of the syncytial embryo. Associates with centrosomes and interphase microtubules during mitosis, and recruits CP60; may have a role in maintaining centrosome and spindle integrity. The chain is Centrosome-associated zinc finger protein Cp190 from Drosophila melanogaster (Fruit fly).